Consider the following 352-residue polypeptide: DNA polymerase IV (352 aa).

In terms of domain architecture, UmuC spans 4–185 (IIHVDMDCFF…LPLSKIPGVG (182 aa)). Residues D8 and D103 each contribute to the Mg(2+) site. E104 is an active-site residue.

It belongs to the DNA polymerase type-Y family. Monomer. Mg(2+) serves as cofactor.

The protein resides in the cytoplasm. It catalyses the reaction DNA(n) + a 2'-deoxyribonucleoside 5'-triphosphate = DNA(n+1) + diphosphate. Functionally, poorly processive, error-prone DNA polymerase involved in untargeted mutagenesis. Copies undamaged DNA at stalled replication forks, which arise in vivo from mismatched or misaligned primer ends. These misaligned primers can be extended by PolIV. Exhibits no 3'-5' exonuclease (proofreading) activity. May be involved in translesional synthesis, in conjunction with the beta clamp from PolIII. In Yersinia pseudotuberculosis serotype O:1b (strain IP 31758), this protein is DNA polymerase IV.